A 167-amino-acid chain; its full sequence is Photosystem I assembly protein Ycf3 (167 aa).

TPR repeat units lie at residues 35-68 (AFTYYRDGMSAQSEGEYAEALQNYYEAMRLEIDP), 72-105 (SYILYNIGLIHTSNGEHAKAIEYYLQALERNPSL), and 120-153 (GEQAVEKEDLETSEAWFDQAADYWKQAIALAPNN).

It belongs to the Ycf3 family.

The protein resides in the plastid. It is found in the chloroplast thylakoid membrane. In terms of biological role, essential for the assembly of the photosystem I (PSI) complex. May act as a chaperone-like factor to guide the assembly of the PSI subunits. This Zygnema circumcarinatum (Green alga) protein is Photosystem I assembly protein Ycf3.